Reading from the N-terminus, the 1992-residue chain is E3 ubiquitin-protein ligase TRIP12 (1992 aa).

Positions 1 to 10 are enriched in polar residues; that stretch reads MSNRPNNNPG. Disordered stretches follow at residues 1 to 398, 797 to 817, and 938 to 1080; these read MSNR…DDSE, QRKP…SKKD, and SLLT…ASKD. Ser2 bears the N-acetylserine mark. Ser12 carries the phosphoserine modification. The segment covering 18-27 has biased composition (polar residues); that stretch reads RNTAGAQPQD. Residues 48–70 are compositionally biased toward basic and acidic residues; sequence DPDRANTSERQKTGQVPKKDNSR. Phosphoserine occurs at positions 77, 85, and 100. Residues 78–88 are compositionally biased toward polar residues; that stretch reads PDYNRTNSPSS. Over residues 119–132 the composition is skewed to polar residues; it reads EQQLKSAQSPSTSK. 2 stretches are compositionally biased toward low complexity: residues 154 to 166 and 175 to 216; these read SSCV…SEST and PTKL…SSTV. Lys181 carries the post-translational modification N6-acetyllysine. Positions 280–290 are enriched in polar residues; it reads PGSSKSETSKP. Phosphoserine occurs at positions 310 and 312. The segment covering 326 to 338 has biased composition (polar residues); sequence QKTTGSCASTSRR. Residues 346 to 358 show a composition bias toward basic and acidic residues; that stretch reads GAAEARRQEKMAD. Polar residues-rich tracts occupy residues 360–371 and 803–812; these read ESNQEAVNSSAA and LANSNTSGYS. Positions 749 to 836 constitute a WWE domain; that stretch reads MLKKGNAQNT…DPELAKSFIK (88 aa). Ser942 is modified (phosphoserine). Residues 948–973 show a composition bias toward low complexity; that stretch reads TNGSGSMGSTTSVSSGTATAATHAAA. 2 positions are modified to phosphoserine: Ser991 and Ser997. Positions 1001–1014 are enriched in basic residues; it reads KRKRLPKRGPRRPK. Ser1016 is subject to Phosphoserine. Over residues 1017–1026 the composition is skewed to basic and acidic residues; it reads PPRDDDKVDN. A compositionally biased stretch (low complexity) spans 1029–1040; the sequence is KSPTTTQSPKSS. A Phosphoserine modification is found at Ser1030. Polar residues predominate over residues 1041 to 1062; the sequence is FLASLNPKTWGRLSTQSNSNNI. 4 positions are modified to phosphoserine: Ser1317, Ser1322, Ser1329, and Ser1376. Thr1377 carries the phosphothreonine modification. Disordered regions lie at residues 1407-1433 and 1568-1587; these read SNKD…NAKK and TNPE…PRLD. N6-acetyllysine is present on Lys1425. Phosphoserine is present on Ser1427. The interval 1496 to 1570 is K-box; the sequence is EIIPTSEFIN…AMQRLLDTNP (75 aa). One can recognise an HECT domain in the interval 1885 to 1992; that stretch reads PDHGYTHDSR…REGQQSFHLS (108 aa). The Glycyl thioester intermediate role is filled by Cys1959.

Belongs to the UPL family. K-HECT subfamily. In terms of assembly, interacts with MYC; leading to disrupt interaction with isoform p19ARF/ARF of CDKN2A. Interacts with TRADD; leading to disrupt interaction with isoform p19ARF/ARF of CDKN2A. Interacts with SMARCC1; leading to disrupt interaction with SMARCE1.

Its subcellular location is the nucleus. The protein resides in the nucleoplasm. The catalysed reaction is S-ubiquitinyl-[E2 ubiquitin-conjugating enzyme]-L-cysteine + [acceptor protein]-L-lysine = [E2 ubiquitin-conjugating enzyme]-L-cysteine + N(6)-ubiquitinyl-[acceptor protein]-L-lysine.. The protein operates within protein modification; protein ubiquitination. Functionally, E3 ubiquitin-protein ligase involved in ubiquitin fusion degradation (UFD) pathway and regulation of DNA repair. Part of the ubiquitin fusion degradation (UFD) pathway, a process that mediates ubiquitination of protein at their N-terminus, regardless of the presence of lysine residues in target proteins. Acts as a key regulator of DNA damage response by acting as a suppressor of RNF168, an E3 ubiquitin-protein ligase that promotes accumulation of 'Lys-63'-linked histone H2A and H2AX at DNA damage sites, thereby acting as a guard against excessive spreading of ubiquitinated chromatin at damaged chromosomes. In normal cells, mediates ubiquitination and degradation of isoform p19ARF/ARF of CDKN2A, a lysine-less tumor suppressor required for p53/TP53 activation under oncogenic stress. In cancer cells, however, isoform p19ARF/ARF and TRIP12 are located in different cell compartments, preventing isoform p19ARF/ARF ubiquitination and degradation. Does not mediate ubiquitination of isoform p16-INK4a of CDKN2A. Also catalyzes ubiquitination of NAE1 and SMARCE1, leading to their degradation. Ubiquitination and degradation of target proteins is regulated by interaction with proteins such as MYC, TRADD or SMARCC1, which disrupt the interaction between TRIP12 and target proteins. Mediates ubiquitination of ASXL1: following binding to N(6)-methyladenosine methylated DNA, ASXL1 is ubiquitinated by TRIP12, leading to its degradation and subsequent inactivation of the PR-DUB complex. The polypeptide is E3 ubiquitin-protein ligase TRIP12 (TRIP12) (Homo sapiens (Human)).